The sequence spans 126 residues: Small ribosomal subunit protein uS12m (126 aa).

Disordered regions lie at residues 1 to 27 and 106 to 126; these read MPTM…LNKC and GIPG…KDYI. Basic residues-rich tracts occupy residues 12–23 and 109–120; these read RESKRRTKRTRA and GRRRGRSKYGTK.

It belongs to the universal ribosomal protein uS12 family.

The protein localises to the mitochondrion. In terms of biological role, protein S12 is involved in the translation initiation step. The protein is Small ribosomal subunit protein uS12m (RPS12) of Marchantia polymorpha (Common liverwort).